Consider the following 498-residue polypeptide: Glycerol kinase (498 aa).

Thr12 contacts ADP. ATP is bound by residues Thr12, Thr13, and Ser14. Thr12 is a binding site for sn-glycerol 3-phosphate. Arg16 lines the ADP pocket. Arg82, Glu83, Tyr134, and Asp243 together coordinate sn-glycerol 3-phosphate. Positions 82, 83, 134, 243, and 244 each coordinate glycerol. Residues Thr265 and Gly308 each coordinate ADP. 4 residues coordinate ATP: Thr265, Gly308, Gln312, and Gly409. Residues Gly409 and Asn413 each contribute to the ADP site.

This sequence belongs to the FGGY kinase family.

The enzyme catalyses glycerol + ATP = sn-glycerol 3-phosphate + ADP + H(+). It functions in the pathway polyol metabolism; glycerol degradation via glycerol kinase pathway; sn-glycerol 3-phosphate from glycerol: step 1/1. Inhibited by fructose 1,6-bisphosphate (FBP). Key enzyme in the regulation of glycerol uptake and metabolism. Catalyzes the phosphorylation of glycerol to yield sn-glycerol 3-phosphate. The chain is Glycerol kinase from Petrotoga mobilis (strain DSM 10674 / SJ95).